The primary structure comprises 318 residues: Ribokinase (318 aa).

Residues 12-14 (NWD), 40-44 (GKAAN), and Glu-141 each bind substrate. Residues Asn-188 and 235–240 (TLGGNG) contribute to the ATP site. Positions 264 and 266 each coordinate K(+). Position 269 to 270 (269 to 270 (GD)) interacts with ATP. Residue Asp-270 coordinates substrate. The active-site Proton acceptor is Asp-270. 4 residues coordinate K(+): Ser-301, Arg-304, Gly-306, and Ser-310.

This sequence belongs to the carbohydrate kinase PfkB family. Ribokinase subfamily. As to quaternary structure, homodimer. The cofactor is Mg(2+).

The protein resides in the cytoplasm. The protein localises to the nucleus. It catalyses the reaction D-ribose + ATP = D-ribose 5-phosphate + ADP + H(+). It participates in carbohydrate metabolism; D-ribose degradation; D-ribose 5-phosphate from beta-D-ribopyranose: step 2/2. With respect to regulation, activated by a monovalent cation that binds near, but not in, the active site. The most likely occupant of the site in vivo is potassium. Ion binding induces a conformational change that may alter substrate affinity. Functionally, catalyzes the phosphorylation of ribose at O-5 in a reaction requiring ATP and magnesium. The resulting D-ribose-5-phosphate can then be used either for sythesis of nucleotides, histidine, and tryptophan, or as a component of the pentose phosphate pathway. This is Ribokinase (rbsk) from Dictyostelium discoideum (Social amoeba).